Reading from the N-terminus, the 125-residue chain is Small ribosomal subunit protein uS13 (125 aa).

Residues 95–125 (GLPVNGQRTRTNARTRKGVKKTVANKKKATK) form a disordered region. A compositionally biased stretch (basic residues) spans 105-125 (TNARTRKGVKKTVANKKKATK).

This sequence belongs to the universal ribosomal protein uS13 family. In terms of assembly, part of the 30S ribosomal subunit. Forms a loose heterodimer with protein S19. Forms two bridges to the 50S subunit in the 70S ribosome.

Its function is as follows. Located at the top of the head of the 30S subunit, it contacts several helices of the 16S rRNA. In the 70S ribosome it contacts the 23S rRNA (bridge B1a) and protein L5 of the 50S subunit (bridge B1b), connecting the 2 subunits; these bridges are implicated in subunit movement. Contacts the tRNAs in the A and P-sites. This chain is Small ribosomal subunit protein uS13, found in Leptospira biflexa serovar Patoc (strain Patoc 1 / Ames).